A 281-amino-acid polypeptide reads, in one-letter code: Protoheme IX farnesyltransferase (281 aa).

Transmembrane regions (helical) follow at residues 13 to 33, 38 to 58, 85 to 105, 107 to 127, 132 to 152, 161 to 181, 206 to 226, 227 to 247, and 261 to 281; these read VIWL…GPLV, LIEL…FNMY, ALTF…LWLG, WVTL…TIML, WLNI…GWIM, ILLS…LAYY, IISI…QLYM, AKLI…IVTI, and MFKA…ISRI.

The protein belongs to the UbiA prenyltransferase family. Protoheme IX farnesyltransferase subfamily.

It localises to the cell membrane. The catalysed reaction is heme b + (2E,6E)-farnesyl diphosphate + H2O = Fe(II)-heme o + diphosphate. Its pathway is porphyrin-containing compound metabolism; heme O biosynthesis; heme O from protoheme: step 1/1. Converts heme B (protoheme IX) to heme O by substitution of the vinyl group on carbon 2 of heme B porphyrin ring with a hydroxyethyl farnesyl side group. The polypeptide is Protoheme IX farnesyltransferase (Caldivirga maquilingensis (strain ATCC 700844 / DSM 13496 / JCM 10307 / IC-167)).